We begin with the raw amino-acid sequence, 161 residues long: uncharacterized protein (161 aa).

The or 21 signal peptide spans Met1 to Ala23. The chain crosses the membrane as a helical span at residues Ile129–Ala149.

It localises to the membrane. This is an uncharacterized protein from Haemophilus influenzae (strain ATCC 51907 / DSM 11121 / KW20 / Rd).